We begin with the raw amino-acid sequence, 445 residues long: C4-dicarboxylate transport protein (445 aa).

8 consecutive transmembrane segments (helical) span residues 24–44 (VLYV…WLSP), 62–82 (LIKM…IAHI), 105–125 (FALV…GLAA), 163–183 (GDIL…MALG), 201–221 (FGVI…AMAF), 234–254 (LIGL…LVLG), 322–342 (IYMT…LSFG), and 370–390 (AGTL…VFSI).

It belongs to the dicarboxylate/amino acid:cation symporter (DAACS) (TC 2.A.23) family.

It is found in the cell inner membrane. Responsible for the transport of dicarboxylates such as succinate, fumarate, and malate from the periplasm across the membrane. The polypeptide is C4-dicarboxylate transport protein (Rhodopseudomonas palustris (strain ATCC BAA-98 / CGA009)).